A 361-amino-acid chain; its full sequence is D-alanine--D-alanine ligase (361 aa).

In terms of domain architecture, ATP-grasp spans 134-344; it reads KLLLKSFNIP…FKDLIDNLID (211 aa). 167–222 is a binding site for ATP; that stretch reads KEVLGYPVIVKPAVLGSSIGINVAYSENQIESCIEEALKYDLTIVIEKFIEAREIE. Positions 297, 311, and 313 each coordinate Mg(2+).

It belongs to the D-alanine--D-alanine ligase family. It depends on Mg(2+) as a cofactor. Requires Mn(2+) as cofactor.

The protein resides in the cytoplasm. The enzyme catalyses 2 D-alanine + ATP = D-alanyl-D-alanine + ADP + phosphate + H(+). The protein operates within cell wall biogenesis; peptidoglycan biosynthesis. Its function is as follows. Cell wall formation. In Borreliella afzelii (strain PKo) (Borrelia afzelii), this protein is D-alanine--D-alanine ligase.